A 566-amino-acid chain; its full sequence is UvrABC system protein C (566 aa).

The region spanning E16–V93 is the GIY-YIG domain. A UVR domain is found at A199–L234.

The protein belongs to the UvrC family. Interacts with UvrB in an incision complex.

Its subcellular location is the cytoplasm. Functionally, the UvrABC repair system catalyzes the recognition and processing of DNA lesions. UvrC both incises the 5' and 3' sides of the lesion. The N-terminal half is responsible for the 3' incision and the C-terminal half is responsible for the 5' incision. This Aquifex aeolicus (strain VF5) protein is UvrABC system protein C.